Reading from the N-terminus, the 230-residue chain is Cytidylate kinase (230 aa).

12-20 lines the ATP pocket; the sequence is GPSGTGKST.

The protein belongs to the cytidylate kinase family. Type 1 subfamily.

The protein resides in the cytoplasm. The enzyme catalyses CMP + ATP = CDP + ADP. The catalysed reaction is dCMP + ATP = dCDP + ADP. The protein is Cytidylate kinase of Corynebacterium glutamicum (strain ATCC 13032 / DSM 20300 / JCM 1318 / BCRC 11384 / CCUG 27702 / LMG 3730 / NBRC 12168 / NCIMB 10025 / NRRL B-2784 / 534).